We begin with the raw amino-acid sequence, 75 residues long: Kappa-thalatoxin-Tas2a (75 aa).

Positions M1 to A22 are cleaved as a signal peptide. Residues R23 to R40 constitute a propeptide that is removed on maturation. Residues C43–C75 form the ShKT domain. Intrachain disulfides connect C43–C75, C52–C68, and C57–C72.

Belongs to the sea anemone type 1 potassium channel toxin family. Type 1a subfamily.

It localises to the secreted. The protein localises to the nematocyst. In terms of biological role, inhibits voltage-gated potassium channels (Kv) with higher potency for Kv1.1/KCNA1 and Kv1.3/KCNA3 (IC(50)=3.4 nM). The sequence is that of Kappa-thalatoxin-Tas2a from Thalassianthus aster (Fuzzy-tipped anemone).